Reading from the N-terminus, the 674-residue chain is Linear primary-alkylsulfatase (674 aa).

A signal peptide spans 1-41 (MKLNALSTATHGSRSSPVKLWKFSTSFLLAASIIVSGQSWA). Positions 192, 194, 196, 197, 303, and 322 each coordinate Zn(2+). Sulfate-binding positions include 330–335 (NTYSLR) and Arg340. Residue His367 coordinates Zn(2+). A sulfate-binding site is contributed by Tyr428.

This sequence belongs to the metallo-beta-lactamase superfamily. Type III sulfatase family. In terms of assembly, homodimer. The cofactor is Zn(2+).

The protein localises to the periplasm. The catalysed reaction is a primary linear alkyl sulfate ester + H2O = a primary alcohol + sulfate + H(+). Its activity is regulated as follows. Inhibited by EDTA. Slightly activated in the presence of Ca(2+). Alkylsulfatase that cleaves primary alkyl sulfates such as sodium octyl sulfate and the widely used detergent sodium dodecyl sulfate (SDS). The protein is Linear primary-alkylsulfatase of Pseudomonas sp.